Here is a 345-residue protein sequence, read N- to C-terminus: MRWKRTIQLLDVHAEGEIGRVAIGGVPKIPGETIAAQLHWLNTDPKGDELRRFLCLEPRGAPIGSVNLLLPARHPDADAAFIILQPDQAHASSGSNSICVTTALLESGIVEMQEPETIVTLETAAGLVKATATCRDGRCEKVKLTMVPSFVHELDVEIDTPHWGKIKADLCYGGIFYALVDVGQINLTIEKANAAGLVQAGMILKELINRDIKVVHPEIPAISGVAYVMFRDTEADGTVRTCTTMWPGRADRSPCGTGNSANLATLHARGKAKVGDVFTSKSIIGSEFEVGLQAVTEVAGRPAVIPTITGRGFTFGLTQVALDPFDPHPGGFALTDVWGPSAGEI.

A substrate-binding site is contributed by Gln85. Ser93 acts as the Proton acceptor in catalysis. Substrate contacts are provided by residues 94-95 and Asp251; that span reads GS. The Proton donor role is filled by Cys255. Substrate is bound at residue 256 to 257; the sequence is GT.

The protein belongs to the proline racemase family.

It catalyses the reaction trans-4-hydroxy-L-proline = cis-4-hydroxy-D-proline. Catalyzes the epimerization of trans-4-hydroxy-L-proline (t4LHyp) to cis-4-hydroxy-D-proline (c4DHyp). May be involved in a degradation pathway of t4LHyp. Can also catalyze the epimerization of trans-3-hydroxy-L-proline (t3LHyp) to cis-3-hydroxy-D-proline (c3DHyp) in vitro, albeit with 2-fold lower efficiency. Displays no proline racemase activity. This Rhizobium etli (strain ATCC 51251 / DSM 11541 / JCM 21823 / NBRC 15573 / CFN 42) protein is 4-hydroxyproline 2-epimerase.